Consider the following 279-residue polypeptide: Protein PHOTOPERIODIC CONTROL OF HYPOCOTYL 1-LIKE (279 aa).

Interacts with light-activated phyB. Binds directly to PIF1 and COP1. In terms of processing, ubiquitinated by COP1 in darkness; this leads to proteasomal degradation. In terms of tissue distribution, mainly expressed in cotyledons, hypocotyls, leaves.

It is found in the nucleus. Functionally, together with PCH1, regulates growth and development adaptation to the ambient environment by controlling negatively phytochrome B (phyB) dark reversion, a temperature-dependent thermal relaxation process during which phyB reverts from the active to the inactive state. Contributes to red (R) light-triggered photomorphogenesis. Promotes various light responses such as seed germination, hypocotyl gravitropism and chlorophyll biosynthesis, via direct interaction with PIF1 and COP1. Prevents DNA-binding ability of PIF1 to negatively regulate the expressions of its target genes. Facilitates the physical interaction between phyB and PIF1 and the subsequent light-induced degradation of PIF1. The polypeptide is Protein PHOTOPERIODIC CONTROL OF HYPOCOTYL 1-LIKE (Arabidopsis thaliana (Mouse-ear cress)).